The chain runs to 370 residues: GTPase Obg (370 aa).

Residues 1-159 (MKFIDEARIE…RMLRLELKVL (159 aa)) enclose the Obg domain. The OBG-type G domain maps to 160–334 (ADVGLLGMPN…LCYAIYDYLA (175 aa)). Residues 166-173 (GMPNAGKS), 191-195 (FTTLA), 213-216 (DIPG), 284-287 (NKLD), and 315-317 (SAL) contribute to the GTP site. Residues Ser-173 and Thr-193 each contribute to the Mg(2+) site. The disordered stretch occupies residues 344–370 (EEEDLATDVRFRDAPPADGGATPGDDA).

Belongs to the TRAFAC class OBG-HflX-like GTPase superfamily. OBG GTPase family. In terms of assembly, monomer. Requires Mg(2+) as cofactor.

The protein resides in the cytoplasm. In terms of biological role, an essential GTPase which binds GTP, GDP and possibly (p)ppGpp with moderate affinity, with high nucleotide exchange rates and a fairly low GTP hydrolysis rate. Plays a role in control of the cell cycle, stress response, ribosome biogenesis and in those bacteria that undergo differentiation, in morphogenesis control. This Burkholderia ambifaria (strain ATCC BAA-244 / DSM 16087 / CCUG 44356 / LMG 19182 / AMMD) (Burkholderia cepacia (strain AMMD)) protein is GTPase Obg.